Consider the following 312-residue polypeptide: Protein-methionine-sulfoxide reductase catalytic subunit MsrP (312 aa).

The segment at residues 1–47 (MLIRRPPDLLPSEITPEPLARGRRALLKGLGAGAALAGLGLPQISQA) is a signal peptide (tat-type signal). Mo-molybdopterin-binding positions include Asn74, 77–78 (YE), Cys133, Thr168, Asn216, Arg221, and 232–234 (SAK).

This sequence belongs to the MsrP family. As to quaternary structure, heterodimer of a catalytic subunit (MsrP) and a heme-binding subunit (MsrQ). Mo-molybdopterin serves as cofactor. Predicted to be exported by the Tat system. The position of the signal peptide cleavage has not been experimentally proven.

Its subcellular location is the periplasm. The enzyme catalyses L-methionyl-[protein] + a quinone + H2O = L-methionyl-(R)-S-oxide-[protein] + a quinol. Part of the MsrPQ system that repairs oxidized periplasmic proteins containing methionine sulfoxide residues (Met-O), using respiratory chain electrons. Thus protects these proteins from oxidative-stress damage caused by reactive species of oxygen and chlorine generated by the host defense mechanisms. MsrPQ is essential for the maintenance of envelope integrity under bleach stress, rescuing a wide series of structurally unrelated periplasmic proteins from methionine oxidation. The catalytic subunit MsrP is non-stereospecific, being able to reduce both (R-) and (S-) diastereoisomers of methionine sulfoxide. Involved in protection against reactive chlorine species (RCS) generated by chlorite and hypochlorite. The protein is Protein-methionine-sulfoxide reductase catalytic subunit MsrP of Azospira oryzae (strain ATCC BAA-33 / DSM 13638 / PS) (Dechlorosoma suillum).